The following is a 750-amino-acid chain: Photosystem I P700 chlorophyll a apoprotein A1 (750 aa).

The next 8 helical transmembrane spans lie at 70–93 (VFSAHFGQLSIIFLWLSGMYFHGA), 156–179 (LYCTAIGALVFAALMLFAGWFHYH), 195–219 (LNHHLAGLLGLGSLSWAGHQVHVSL), 291–309 (IAHHHLAIAILFLVAGHMY), 346–369 (WHAQLSLNLAMLGSSTIVVAHHMY), 385–411 (LSLFTHHMWIGGFLIVGAAAHAAIFMV), 433–455 (AIISHLNWACIFLGFHSFGLYIH), and 531–549 (FLVHHIHAFTIHVTVLILL). The [4Fe-4S] cluster site is built by Cys-573 and Cys-582. Helical transmembrane passes span 589–610 (HVFLGLFWMYNAISVVIFHFSW) and 664–686 (LSAYGLFFLGAHFVWAFSLMFLF). His-675 lines the chlorophyll a' pocket. Met-683 and Tyr-691 together coordinate chlorophyll a. Trp-692 is a binding site for phylloquinone. The helical transmembrane segment at 724-744 (AVGVTHYLLGGIATTWAFFLA) threads the bilayer.

This sequence belongs to the PsaA/PsaB family. As to quaternary structure, the PsaA/B heterodimer binds the P700 chlorophyll special pair and subsequent electron acceptors. PSI consists of a core antenna complex that captures photons, and an electron transfer chain that converts photonic excitation into a charge separation. The eukaryotic PSI reaction center is composed of at least 11 subunits. P700 is a chlorophyll a/chlorophyll a' dimer, A0 is one or more chlorophyll a, A1 is one or both phylloquinones and FX is a shared 4Fe-4S iron-sulfur center. is required as a cofactor.

Its subcellular location is the plastid. The protein resides in the chloroplast thylakoid membrane. The catalysed reaction is reduced [plastocyanin] + hnu + oxidized [2Fe-2S]-[ferredoxin] = oxidized [plastocyanin] + reduced [2Fe-2S]-[ferredoxin]. PsaA and PsaB bind P700, the primary electron donor of photosystem I (PSI), as well as the electron acceptors A0, A1 and FX. PSI is a plastocyanin-ferredoxin oxidoreductase, converting photonic excitation into a charge separation, which transfers an electron from the donor P700 chlorophyll pair to the spectroscopically characterized acceptors A0, A1, FX, FA and FB in turn. Oxidized P700 is reduced on the lumenal side of the thylakoid membrane by plastocyanin. The chain is Photosystem I P700 chlorophyll a apoprotein A1 from Calycanthus floridus var. glaucus (Eastern sweetshrub).